The sequence spans 443 residues: ATP-dependent protease ATPase subunit HslU (443 aa).

ATP-binding positions include Ile18, 60 to 65 (GVGKTE), Asp256, Glu321, and Arg393.

It belongs to the ClpX chaperone family. HslU subfamily. A double ring-shaped homohexamer of HslV is capped on each side by a ring-shaped HslU homohexamer. The assembly of the HslU/HslV complex is dependent on binding of ATP.

Its subcellular location is the cytoplasm. Functionally, ATPase subunit of a proteasome-like degradation complex; this subunit has chaperone activity. The binding of ATP and its subsequent hydrolysis by HslU are essential for unfolding of protein substrates subsequently hydrolyzed by HslV. HslU recognizes the N-terminal part of its protein substrates and unfolds these before they are guided to HslV for hydrolysis. This chain is ATP-dependent protease ATPase subunit HslU, found in Buchnera aphidicola subsp. Acyrthosiphon pisum (strain 5A).